Reading from the N-terminus, the 377-residue chain is DNA replication and repair protein RecF (377 aa).

Gly30–Thr37 is a binding site for ATP.

This sequence belongs to the RecF family.

It localises to the cytoplasm. In terms of biological role, the RecF protein is involved in DNA metabolism; it is required for DNA replication and normal SOS inducibility. RecF binds preferentially to single-stranded, linear DNA. It also seems to bind ATP. This chain is DNA replication and repair protein RecF, found in Thermobifida fusca (strain YX).